Reading from the N-terminus, the 278-residue chain is Elongation factor Ts (278 aa).

Residues 79–82 (TDFV) form an involved in Mg(2+) ion dislocation from EF-Tu region.

This sequence belongs to the EF-Ts family.

It is found in the cytoplasm. Associates with the EF-Tu.GDP complex and induces the exchange of GDP to GTP. It remains bound to the aminoacyl-tRNA.EF-Tu.GTP complex up to the GTP hydrolysis stage on the ribosome. This is Elongation factor Ts from Borrelia duttonii (strain Ly).